The chain runs to 1073 residues: 3-hydroxy-3-methylglutaryl-coenzyme A reductase 1 (1073 aa).

Helical transmembrane passes span 23-43 (FMVV…DDYI), 181-201 (FDIL…IKVF), 211-231 (FWLA…ALLV), 298-318 (HLVV…LTGL), 326-346 (SLIL…ILGL), 399-419 (IAYF…FWLG), 459-479 (GTVV…MVQL), and 498-518 (IISK…VYFL). Positions 182-346 (DILLIFVAYL…YTFFSAILGL (165 aa)) constitute an SSD domain. Low complexity predominate over residues 542 to 565 (SSVTATTTTTATGTTSSGAATSKT). Residues 542 to 589 (SSVTATTTTTATGTTSSGAATSKTIGNNKGLKSVQEIPDNEDESSDEE) form a disordered region. Positions 579–589 (PDNEDESSDEE) are enriched in acidic residues. The active-site Charge relay system is Glu714. 720–726 (STMRGCK) contacts CoA. Residues 781–783 (SRF) and 808–816 (DAMGMNMIS) each bind NADP(+). Lys848 (charge relay system) is an active-site residue. 877 to 879 (VLK) provides a ligand contact to CoA. The Charge relay system role is filled by Asp924. Residues 997–1017 (IVASAVLAAELSLCSALAAGH) form a helical membrane-spanning segment. 1021–1022 (SH) contacts CoA. The Proton donor role is filled by His1022. Residues 1025–1056 (HNRSKAPAAGATTTTTPAITDSKASNGSIASN) are disordered. 1026-1027 (NR) provides a ligand contact to NADP(+). The span at 1030 to 1042 (APAAGATTTTTPA) shows a compositional bias: low complexity. Residues 1046–1055 (SKASNGSIAS) are compositionally biased toward polar residues.

The protein belongs to the HMG-CoA reductase family.

It localises to the endoplasmic reticulum membrane. The catalysed reaction is (R)-mevalonate + 2 NADP(+) + CoA = (3S)-3-hydroxy-3-methylglutaryl-CoA + 2 NADPH + 2 H(+). The protein operates within metabolic intermediate biosynthesis; (R)-mevalonate biosynthesis; (R)-mevalonate from acetyl-CoA: step 3/3. Its function is as follows. HMG-CoA reductase; part of the first module of ergosterol biosynthesis pathway that includes the early steps of the pathway, conserved across all eukaryotes, and which results in the formation of mevalonate from acetyl-coenzyme A (acetyl-CoA). HMG1 catalyzes the reduction of hydroxymethylglutaryl-CoA (HMG-CoA) to mevalonate. The first module starts with the action of the cytosolic acetyl-CoA acetyltransferase ERG10 that catalyzes the formation of acetoacetyl-CoA. The hydroxymethylglutaryl-CoA synthase ERG13 then condenses acetyl-CoA with acetoacetyl-CoA to form HMG-CoA. The 3-hydroxy-3-methylglutaryl-coenzyme A (HMG-CoA) reductase HMG1 finally reduces HMG-CoA to produce mevalonate. This Candida albicans (strain SC5314 / ATCC MYA-2876) (Yeast) protein is 3-hydroxy-3-methylglutaryl-coenzyme A reductase 1.